The chain runs to 403 residues: Methylthioribose-1-phosphate isomerase (403 aa).

The active-site Proton donor is aspartate 280.

It belongs to the eIF-2B alpha/beta/delta subunits family. MtnA subfamily.

The protein localises to the cytoplasm. It localises to the nucleus. It catalyses the reaction 5-(methylsulfanyl)-alpha-D-ribose 1-phosphate = 5-(methylsulfanyl)-D-ribulose 1-phosphate. It functions in the pathway amino-acid biosynthesis; L-methionine biosynthesis via salvage pathway; L-methionine from S-methyl-5-thio-alpha-D-ribose 1-phosphate: step 1/6. Its function is as follows. Catalyzes the interconversion of methylthioribose-1-phosphate (MTR-1-P) into methylthioribulose-1-phosphate (MTRu-1-P). The polypeptide is Methylthioribose-1-phosphate isomerase (Eremothecium gossypii (strain ATCC 10895 / CBS 109.51 / FGSC 9923 / NRRL Y-1056) (Yeast)).